A 240-amino-acid polypeptide reads, in one-letter code: Ribose-5-phosphate isomerase A (240 aa).

Substrate-binding positions include 41-44 (TGST), 94-97 (DGAD), and 107-110 (KGGG). Glutamate 116 serves as the catalytic Proton acceptor. Lysine 134 is a substrate binding site.

It belongs to the ribose 5-phosphate isomerase family. Homodimer.

The catalysed reaction is aldehydo-D-ribose 5-phosphate = D-ribulose 5-phosphate. It functions in the pathway carbohydrate degradation; pentose phosphate pathway; D-ribose 5-phosphate from D-ribulose 5-phosphate (non-oxidative stage): step 1/1. Catalyzes the reversible conversion of ribose-5-phosphate to ribulose 5-phosphate. The polypeptide is Ribose-5-phosphate isomerase A (Polaromonas sp. (strain JS666 / ATCC BAA-500)).